We begin with the raw amino-acid sequence, 307 residues long: Estrogen receptor (307 aa).

The segment at residues 1–43 (GHNDYMCPATNQCTIDKNRRKSCQACRLRKCYEVGMMKGGIRK) is a DNA-binding region (nuclear receptor). The segment at 7–31 (CPATNQCTIDKNRRKSCQACRLRKC) adopts an NR C4-type zinc-finger fold. Positions 44 to 95 (DRRGGRILKHKRQREEHDNRNAGAIVERRSPNLWPSPLMITHNKKNSPALSL) are hinge. The 212-residue stretch at 96–307 (TADQIVSALL…HFRHMSNKGM (212 aa)) folds into the NR LBD domain.

It belongs to the nuclear hormone receptor family. NR3 subfamily. Binds DNA as a homodimer. Can form a heterodimer with ER-beta.

It is found in the nucleus. The steroid hormones and their receptors are involved in the regulation of eukaryotic gene expression and affect cellular proliferation and differentiation in target tissues. This Aspidoscelis uniparens (Desert grassland whiptail lizard) protein is Estrogen receptor (ESR1).